The following is a 315-amino-acid chain: Polyprenyl transferase mpaA (315 aa).

8 consecutive transmembrane segments (helical) span residues 40 to 60, 84 to 103, 118 to 135, 143 to 163, 174 to 194, 224 to 244, 248 to 268, and 279 to 299; these read IEFILYKAGLCFVHCLLLCGA, LASGKVTLTEALLWMTGQYF, IWSLMLPLTASIMLYPYL, VFVYPQYILGLAIGYPAITGW, GDIIKHCIPICLLVFFWCVYF, LFLAFLSVLPLLTIPYIISTI, WLWVSWMATWTVSIIMQIAQF, and IHWDNFLLGLWTIAACMVEVG.

The protein belongs to the UbiA prenyltransferase family. Requires Mg(2+) as cofactor.

Its subcellular location is the golgi apparatus membrane. It carries out the reaction 5,7-dihydroxy-4-methylphthalide + (2E,6E)-farnesyl diphosphate = 4-farnesyl-3,5-dihydroxy-6-methylphthalide + diphosphate. It functions in the pathway secondary metabolite biosynthesis; terpenoid biosynthesis. In terms of biological role, polyprenyl transferase; part of the gene cluster that mediates the biosynthesis of mycophenolic acid (MPA), the first isolated antibiotic natural product in the world obtained from a culture of Penicillium brevicompactum in 1893. MpaA is a Golgi apparatus-associated enzyme that catalyzes the prenylation of 5,7-dihydroxy-4,6-dimethylphthalide (DHMP) to yield farnesyl-DHMP (FDHMP). The first step of the pathway is the synthesis of 5-methylorsellinic acid (5MOA) by the cytosolic polyketide synthase mpaC. 5MOA is then converted to the phthalide compound 5,7-dihydroxy-4,6-dimethylphthalide (DHMP) by the endoplasmic reticulum-bound cytochrome P450 monooxygenase mpaDE. MpaDE first catalyzes hydroxylation of 5-MOA to 4,6-dihydroxy-2-(hydroxymethyl)-3-methylbenzoic acid (DHMB). MpaDE then acts as a lactone synthase that catalyzes the ring closure to convert DHMB into DHMP. The next step is the prenylation of DHMP by the Golgi apparatus-associated prenyltransferase mpaA to yield farnesyl-DHMP (FDHMP). The ER-bound oxygenase mpaB then mediates the oxidative cleavage the C19-C20 double bond in FDHMP to yield FDHMP-3C via a mycophenolic aldehyde intermediate. The O-methyltransferase mpaG catalyzes the methylation of FDHMP-3C to yield MFDHMP-3C. After the cytosolic methylation of FDHMP-3C, MFDHMP-3C enters into peroxisomes probably via free diffusion due to its low molecular weight. Upon a peroxisomal CoA ligation reaction, catalyzed by a beta-oxidation component enzyme acyl-CoA ligase ACL891, MFDHMP-3C-CoA would then be restricted to peroxisomes for the following beta-oxidation pathway steps. The peroxisomal beta-oxidation machinery than converts MFDHMP-3C-CoA into MPA_CoA, via a beta-oxidation chain-shortening process. Finally mpaH acts as a peroxisomal acyl-CoA hydrolase with high substrate specificity toward MPA-CoA to release the final product MPA. The polypeptide is Polyprenyl transferase mpaA (Penicillium brevicompactum).